The sequence spans 209 residues: GTP-binding protein RHO1 (209 aa).

Serine 2 is subject to N-acetylserine. 17-24 contacts GTP; that stretch reads GDGACGKT. The Effector region signature appears at 39 to 47; the sequence is YVPTVFENY. GTP is bound by residues 64–68 and 122–125; these read DTAGQ and CKVD. Residues 187–209 form a disordered region; that stretch reads KSKTNGKAKKNTTEKKKKKCVLL. The segment covering 190–209 has biased composition (basic residues); it reads TNGKAKKNTTEKKKKKCVLL. Cysteine 206 is modified (cysteine methyl ester). The S-geranylgeranyl cysteine moiety is linked to residue cysteine 206. The propeptide at 207–209 is removed in mature form; it reads VLL.

This sequence belongs to the small GTPase superfamily. Rho family. Interacts with BEM4; the interaction is direct. Interacts with SEC3; the interaction is direct. Interacts with the GAP BAG7. Interacts with the GAP LRG1. Interacts with the GAP SAC7. Interacts with the GAP RDI1. Interacts with the 1,3-beta-glucan synthase component FKS1. Interacts with the protein kinase PKC1. Interacts with the G protein beta subunit STE4. Interacts with SKN7. Interacts with TUS1. Interacts with BNI1.

Its subcellular location is the cell membrane. The protein resides in the endosome membrane. The protein localises to the peroxisome membrane. It carries out the reaction GTP + H2O = GDP + phosphate + H(+). Its activity is regulated as follows. Alternates between an inactive form bound to GDP and an active form bound to GTP. Activated by the guanine nucleotide-exchange factors (GEFs) ROM1, ROM2 and TUS1, and inactivated by GTPase-activating proteins (GAPs) BAG7, BEM2, LRG1, and SAC7, and the Rho GDP-dissociation inhibitor RDI1. The different GAPs regulate RHO1 in a target-specific manner. Its function is as follows. Acts as a central regulator in the cell wall integrity signaling pathway, which is regulated by the cell cycle and in response to various types of cell wall stress. Integrates signals from different cell surface sensors, and activates a set of effectors, regulating processes including beta-glucan synthesis at the site of wall remodeling, gene expression related to cell wall biogenesis, organization of the actin cytoskeleton, and protein- and secretory vesicle-targeting to the growth site. Activates the protein kinase C (PKC1) MAP kinase cascade, the beta-1,3-glucan synthase (FKS1), the formin BNI1, the exocyst component SEC3 and the transcription factor SKN7. In Saccharomyces cerevisiae (strain ATCC 204508 / S288c) (Baker's yeast), this protein is GTP-binding protein RHO1 (RHO1).